A 624-amino-acid chain; its full sequence is Ubiquilin-2 (624 aa).

Disordered stretches follow at residues 1-32 and 106-141; these read MAEN…EPKI and NRPQ…TNSN. Alanine 2 is subject to N-acetylalanine. Positions 15–32 are enriched in low complexity; sequence RGPAAAQGSAAAPAEPKI. Residues 33–107 enclose the Ubiquitin-like domain; the sequence is IKVTVKTPKE…VHLVIKSQNR (75 aa). Positions 106–115 are enriched in polar residues; sequence NRPQGQSTQP. Positions 116-141 are enriched in low complexity; it reads SNAAGTNTTSASTPRSNSTPISTNSN. STI1 domains lie at 178–206 and 208–247; these read SPEM…QLIM and NPQM…MQEM. A disordered region spans residues 287-349; that stretch reads FGGNPFASVG…SGSGNSSSNA (63 aa). Residues 294–304 show a composition bias toward low complexity; sequence SVGSSSSSGEG. A compositionally biased stretch (pro residues) spans 316-325; it reads LPNPWAPPPA. The segment covering 326 to 349 has biased composition (low complexity); that stretch reads TQSSATTSTTTSTGSGSGNSSSNA. STI1 domains are found at residues 379–426 and 430–462; these read NPQL…QEQM and LPAF…QQGL. 12 repeat units span residues 491–493, 494–496, 497–499, 500–502, 503–505, 506–508, 509–511, 512–514, 515–517, 518–520, 521–523, and 524–526. The segment at 491–526 is 12 X 3 AA tandem repeats of P-X-X; that stretch reads PVGPVTPIGPIGPIVPFTPIGPIGPIGPTGPAAPPG. Positions 512 to 556 are disordered; the sequence is PIGPIGPTGPAAPPGSTGSGGPTGPTVSSAAPSETTSPTSESGPN. Residues 535–553 show a composition bias toward low complexity; the sequence is GPTVSSAAPSETTSPTSES. The UBA domain occupies 581–621; it reads RFQQQLEQLNAMGFLNREANLQALIATGGDINAAIERLLGS.

Homodimer. Forms heterodimer with UBQLN1. Binds UBE3A and BTRC. Interacts with the 19S proteasome subunit. Interacts with C9orf72. Interacts with HNRNPA1 and HNRNPU. Found in a complex with UBQLN1 and MAP1LC3A/B/C. Interacts with EPS15, EPN1 and EPN2. Interacts with HERPUD1. Interacts with RAD23A. Interacts with TARDBP. Interacts (via C-terminus) with FAF2 (via N-terminus). Interacts with UBQLN4. Binds CD47. Post-translationally, degraded during macroautophagy.

Its subcellular location is the cytoplasm. The protein localises to the nucleus. It is found in the membrane. The protein resides in the cytoplasmic vesicle. It localises to the autophagosome. In terms of biological role, plays an important role in the regulation of different protein degradation mechanisms and pathways including ubiquitin-proteasome system (UPS), autophagy and the endoplasmic reticulum-associated protein degradation (ERAD) pathway. Mediates the proteasomal targeting of misfolded or accumulated proteins for degradation by binding (via UBA domain) to their polyubiquitin chains and by interacting (via ubiquitin-like domain) with the subunits of the proteasome. Plays a role in the ERAD pathway via its interaction with ER-localized proteins FAF2/UBXD8 and HERPUD1 and may form a link between the polyubiquitinated ERAD substrates and the proteasome. Involved in the regulation of macroautophagy and autophagosome formation; required for maturation of autophagy-related protein LC3 from the cytosolic form LC3-I to the membrane-bound form LC3-II and may assist in the maturation of autophagosomes to autolysosomes by mediating autophagosome-lysosome fusion. Negatively regulates the endocytosis of GPCR receptors: AVPR2 and ADRB2, by specifically reducing the rate at which receptor-arrestin complexes concentrate in clathrin-coated pits (CCPs). In Homo sapiens (Human), this protein is Ubiquilin-2 (UBQLN2).